We begin with the raw amino-acid sequence, 257 residues long: Phosphatidylglycerol--prolipoprotein diacylglyceryl transferase (257 aa).

7 consecutive transmembrane segments (helical) span residues 13–33, 49–69, 88–108, 123–143, 152–172, 185–202, and 223–243; these read IGPIDVHWYGIFMAISIAIGG, FLLNLLMIVVISGVVGARLMF, IYEGGLSWHGAVLGGFLAGLY, FAVLGLSIGNILVRIGNIFNQ, FAFGRWPAQLVGVAMGIILLI, GYQFWSFIFYYQLMRGLI, and IGFFTLTQLVTPFILILAYWM. R136 lines the a 1,2-diacyl-sn-glycero-3-phospho-(1'-sn-glycerol) pocket.

This sequence belongs to the Lgt family.

The protein localises to the cell membrane. The catalysed reaction is L-cysteinyl-[prolipoprotein] + a 1,2-diacyl-sn-glycero-3-phospho-(1'-sn-glycerol) = an S-1,2-diacyl-sn-glyceryl-L-cysteinyl-[prolipoprotein] + sn-glycerol 1-phosphate + H(+). It participates in protein modification; lipoprotein biosynthesis (diacylglyceryl transfer). Catalyzes the transfer of the diacylglyceryl group from phosphatidylglycerol to the sulfhydryl group of the N-terminal cysteine of a prolipoprotein, the first step in the formation of mature lipoproteins. This chain is Phosphatidylglycerol--prolipoprotein diacylglyceryl transferase, found in Thermoanaerobacter pseudethanolicus (strain ATCC 33223 / 39E) (Clostridium thermohydrosulfuricum).